A 174-amino-acid chain; its full sequence is Amino-acid acetyltransferase (174 aa).

One can recognise an N-acetyltransferase domain in the interval 10-148; the sequence is PVVRRARTSD…VFDEMCRSYD (139 aa).

Belongs to the acetyltransferase family. As to quaternary structure, homodimer and homotetramer.

It carries out the reaction L-glutamate + acetyl-CoA = N-acetyl-L-glutamate + CoA + H(+). The protein operates within amino-acid biosynthesis; L-arginine biosynthesis; N(2)-acetyl-L-ornithine from L-glutamate: step 1/4. With respect to regulation, inhibited by L-arginine. Its function is as follows. Catalyzes the conversion of L-glutamate to alpha-N-acetyl-L-glutamate. L-glutamine is a significantly better substrate compared to L-glutamate. This chain is Amino-acid acetyltransferase (argA), found in Mycobacterium tuberculosis (strain ATCC 25618 / H37Rv).